The chain runs to 782 residues: Zinc finger protein 786 (782 aa).

Residues 9–80 form the KRAB domain; sequence LTFEDVAIYF…WRESQKSGNI (72 aa). A disordered region spans residues 141-164; it reads PQRHDARAPPPLACGPSESTLKEG. A C2H2-type 1; degenerate zinc finger spans residues 192–209; that stretch reads CGESCWENNHLVMHQRGH. A C2H2-type 2 zinc finger spans residues 240 to 262; sequence FRCGVCGKSFRRKLCLLRHLAAH. Positions 285–364 are disordered; that stretch reads SHRLPQQGEK…EGDTEALQHG (80 aa). A C2H2-type 3; degenerate zinc finger spans residues 369–391; the sequence is CSCSECGERSPMSARLASPCRAH. 3 C2H2-type zinc fingers span residues 397–419, 425–447, and 453–475; these read FQCA…QHAH, FSCR…IRVH, and FRCA…QRLH. The segment at 481–503 adopts a C2H2-type 7; degenerate zinc-finger fold; it reads FQCPECGLSFRLESMLRAHRLRH. C2H2-type zinc fingers lie at residues 509–531, 537–559, 565–587, 593–615, 621–643, 649–670, 676–698, 704–726, and 732–754; these read FSCS…LRVH, FQCL…QHTH, FSCG…LRVH, FQCP…QRLH, FQCP…QLLH, FSCE…IRTH, FQCP…QGLH, FHCP…QRIH, and FACG…IRVH.

This sequence belongs to the krueppel C2H2-type zinc-finger protein family.

The protein localises to the nucleus. Its function is as follows. May be involved in transcriptional regulation. This is Zinc finger protein 786 (ZNF786) from Homo sapiens (Human).